The sequence spans 248 residues: PF03932 family protein CutC (248 aa).

Belongs to the CutC family. Homodimer.

It is found in the cytoplasm. In Escherichia coli O9:H4 (strain HS), this protein is PF03932 family protein CutC.